A 282-amino-acid chain; its full sequence is Aquaporin-6 (282 aa).

Residues 1–25 lie on the Cytoplasmic side of the membrane; it reads MDAVEPGGRGWASMLACRLWKAISR. Residues 26-46 form a helical membrane-spanning segment; it reads ALFAEFLATGLYVFFGVGSVM. Residues 47–54 lie on the Extracellular side of the membrane; it reads RWPTALPS. The helical transmembrane segment at 55–73 threads the bilayer; the sequence is VLQIAITFNLVTAMAVQVT. Residues 74–78 lie on the Cytoplasmic side of the membrane; it reads WKASG. Positions 79–88 form an intramembrane region, discontinuously helical; sequence AHANPAVTLA. Positions 82–84 match the NPA 1 motif; the sequence is NPA. Topologically, residues 89-99 are cytoplasmic; sequence FLVGSHISLPR. The chain crosses the membrane as a helical span at residues 100-121; sequence AVAYVAAQLVGATVGAALLYGV. Residues 122 to 141 lie on the Extracellular side of the membrane; it reads MPGDIRETLGINVVRNSVST. A helical membrane pass occupies residues 142-162; sequence GQAVAVELLLTLQLVLCVFAS. At 163 to 168 the chain is on the cytoplasmic side; it reads TDSRQT. The chain crosses the membrane as a helical span at residues 169 to 188; it reads SGSPATMIGISVALGHLIGI. At 189 to 192 the chain is on the extracellular side; the sequence is HFTG. The segment at residues 193-205 is an intramembrane region (discontinuously helical); that stretch reads CSMNPARSFGPAI. The NPA 2 signature appears at 196 to 198; the sequence is NPA. Topologically, residues 206–213 are extracellular; it reads IIGKFTVH. The helical transmembrane segment at 214–234 threads the bilayer; sequence WVFWVGPLMGALLASLIYNFV. The Cytoplasmic segment spans residues 235–282; sequence LFPDTKTLAQRLAILTGTVEVGTGAGAGAEPLKKESQPGSGAVEMESV. Residues 260–282 form a disordered region; that stretch reads GAGAEPLKKESQPGSGAVEMESV.

It belongs to the MIP/aquaporin (TC 1.A.8) family. In terms of assembly, homotetramer; each monomer provides an independent solute pore.

Its subcellular location is the cytoplasmic vesicle membrane. The enzyme catalyses nitrate(in) = nitrate(out). The catalysed reaction is iodide(out) = iodide(in). It carries out the reaction bromide(in) = bromide(out). It catalyses the reaction chloride(in) = chloride(out). The enzyme catalyses Na(+)(in) = Na(+)(out). The catalysed reaction is H2O(in) = H2O(out). It carries out the reaction CO2(out) = CO2(in). It catalyses the reaction NH4(+)(in) = NH4(+)(out). Its function is as follows. Aquaporins form homotetrameric transmembrane channels, with each monomer independently mediating water transport across the plasma membrane along its osmotic gradient. Unlike classical aquaporins, AQP6 is an intracellular channel with selective anion permeability, particularly for nitrate, and exhibits very low water permeability. It may also facilitate the transport of gases, such as CO2 and NH4(+), as demonstrated in vitro. In Homo sapiens (Human), this protein is Aquaporin-6.